Reading from the N-terminus, the 184-residue chain is Peptide deformylase (184 aa).

Residues cysteine 111 and histidine 154 each coordinate Fe cation. Glutamate 155 is an active-site residue. Histidine 158 provides a ligand contact to Fe cation.

Belongs to the polypeptide deformylase family. It depends on Fe(2+) as a cofactor.

It catalyses the reaction N-terminal N-formyl-L-methionyl-[peptide] + H2O = N-terminal L-methionyl-[peptide] + formate. Removes the formyl group from the N-terminal Met of newly synthesized proteins. Requires at least a dipeptide for an efficient rate of reaction. N-terminal L-methionine is a prerequisite for activity but the enzyme has broad specificity at other positions. This chain is Peptide deformylase, found in Lactobacillus helveticus (strain DPC 4571).